A 1163-amino-acid chain; its full sequence is Receptor-type guanylate cyclase gcy-21 (1163 aa).

Positions 1–17 (MLSAVLLLLFFIQNVQN) are cleaved as a signal peptide. The Extracellular portion of the chain corresponds to 18-490 (FDKIELEDIT…ENCGPPANNT (473 aa)). Residues Asn102, Asn296, Asn322, Asn346, Asn466, and Asn488 are each glycosylated (N-linked (GlcNAc...) asparagine). The chain crosses the membrane as a helical span at residues 491 to 511 (FIIVISVGVAVLIGLAIAAAF). Residues 512-1163 (LYKRYRYERR…QIQEKTYEFS (652 aa)) lie on the Cytoplasmic side of the membrane. The 296-residue stretch at 587-882 (FNTGSTARAG…QIKRKLKPLT (296 aa)) folds into the Protein kinase domain. ATP is bound by residues 593 to 601 (ARAGPFGPI) and Lys635. The stretch at 901–930 (TDKLEKDIAERNEELEGEKAKSEALLKMML) forms a coiled coil. The region spanning 953-1083 (TVFFSDCPGF…DTVNTASRME (131 aa)) is the Guanylate cyclase domain.

This sequence belongs to the adenylyl cyclase class-4/guanylyl cyclase family. Expressed in ASG sensory neurons.

It is found in the cell membrane. It carries out the reaction GTP = 3',5'-cyclic GMP + diphosphate. In terms of biological role, guanylate cyclase involved in the production of the second messenger cGMP. Plays a role in dauer formation. This Caenorhabditis elegans protein is Receptor-type guanylate cyclase gcy-21.